A 261-amino-acid chain; its full sequence is Cytochrome c oxidase subunit 3 (261 aa).

Residues 1 to 15 (MTHQTHSYHMVNPSP) lie on the Mitochondrial matrix side of the membrane. The helical transmembrane segment at 16 to 34 (WPLTGALSALLMTSGLIMW) threads the bilayer. Residues 35–40 (FHFNSM) are Mitochondrial intermembrane-facing. A helical membrane pass occupies residues 41-66 (ILLTLGLSTNILTMYQWWRDIIREST). The Mitochondrial matrix portion of the chain corresponds to 67–72 (FQGHHT). Residues 73-105 (PTVQKGLRYGMILFIVSEVLFFTGFFWAFYHSS) form a helical membrane-spanning segment. Topologically, residues 106 to 128 (LAPTPELGGCWPPTGIHPLNPLE) are mitochondrial intermembrane. A helical transmembrane segment spans residues 129–152 (VPLLNTSVLLASGVSITWAHHSLM). At 153 to 155 (EGN) the chain is on the mitochondrial matrix side. Residues 156-183 (RKHMLQALFITIALGLYFTLLQASEYYE) traverse the membrane as a helical segment. The Mitochondrial intermembrane portion of the chain corresponds to 184–190 (APFTISD). A helical transmembrane segment spans residues 191 to 223 (GIYGSTFFVATGFHGLHVIIGSTFLIVCFLRQV). Residues 224–232 (KFHFTSNHH) lie on the Mitochondrial matrix side of the membrane. Residues 233-256 (FGFERAAWYWHFVDVVWLFLYVSI) form a helical membrane-spanning segment. The Mitochondrial intermembrane portion of the chain corresponds to 257–261 (YWWGS).

This sequence belongs to the cytochrome c oxidase subunit 3 family. Component of the cytochrome c oxidase (complex IV, CIV), a multisubunit enzyme composed of 14 subunits. The complex is composed of a catalytic core of 3 subunits MT-CO1, MT-CO2 and MT-CO3, encoded in the mitochondrial DNA, and 11 supernumerary subunits COX4I, COX5A, COX5B, COX6A, COX6B, COX6C, COX7A, COX7B, COX7C, COX8 and NDUFA4, which are encoded in the nuclear genome. The complex exists as a monomer or a dimer and forms supercomplexes (SCs) in the inner mitochondrial membrane with NADH-ubiquinone oxidoreductase (complex I, CI) and ubiquinol-cytochrome c oxidoreductase (cytochrome b-c1 complex, complex III, CIII), resulting in different assemblies (supercomplex SCI(1)III(2)IV(1) and megacomplex MCI(2)III(2)IV(2)).

The protein resides in the mitochondrion inner membrane. The enzyme catalyses 4 Fe(II)-[cytochrome c] + O2 + 8 H(+)(in) = 4 Fe(III)-[cytochrome c] + 2 H2O + 4 H(+)(out). Functionally, component of the cytochrome c oxidase, the last enzyme in the mitochondrial electron transport chain which drives oxidative phosphorylation. The respiratory chain contains 3 multisubunit complexes succinate dehydrogenase (complex II, CII), ubiquinol-cytochrome c oxidoreductase (cytochrome b-c1 complex, complex III, CIII) and cytochrome c oxidase (complex IV, CIV), that cooperate to transfer electrons derived from NADH and succinate to molecular oxygen, creating an electrochemical gradient over the inner membrane that drives transmembrane transport and the ATP synthase. Cytochrome c oxidase is the component of the respiratory chain that catalyzes the reduction of oxygen to water. Electrons originating from reduced cytochrome c in the intermembrane space (IMS) are transferred via the dinuclear copper A center (CU(A)) of subunit 2 and heme A of subunit 1 to the active site in subunit 1, a binuclear center (BNC) formed by heme A3 and copper B (CU(B)). The BNC reduces molecular oxygen to 2 water molecules using 4 electrons from cytochrome c in the IMS and 4 protons from the mitochondrial matrix. The protein is Cytochrome c oxidase subunit 3 (MT-CO3) of Balaenoptera musculus (Blue whale).